The following is a 1021-amino-acid chain: Multidrug resistance protein MdtC (1021 aa).

The Cytoplasmic segment spans residues 1–6 (MKFFAL). Residues 7-29 (FIYRPVATILLSVAITLCGILGF) traverse the membrane as a helical segment. Residues 30–335 (RMLPVAPLPQ…TIRASLEEVE (306 aa)) lie on the Periplasmic side of the membrane. A helical transmembrane segment spans residues 336–353 (QTLIISVALVILVVFLFL). At 354–359 (RSGRAT) the chain is on the cytoplasmic side. A helical membrane pass occupies residues 360–379 (IIPAVAVPVSLIGTFAAMYL). Residues 380-388 (CGFSLNNLS) are Periplasmic-facing. The chain crosses the membrane as a helical span at residues 389–411 (LMALTIATGFVVDDAIVVLENIA). Residues 412–430 (RHLEAGMKPLQAALQGTRE) are Cytoplasmic-facing. Residues 431–453 (VGFTVLSMSLSLVAVFLPLLLMG) form a helical membrane-spanning segment. Topologically, residues 454–467 (GLPGRLLREFAVTL) are periplasmic. The helical transmembrane segment at 468 to 490 (SVAIGISLLVSLTLTPMMCGWML) threads the bilayer. Residues 491–848 (KASKPREQKR…QVFQETMNSQ (358 aa)) are Cytoplasmic-facing. A helical transmembrane segment spans residues 849 to 871 (VILIIAAIATVYIVLGILYESYV). The Periplasmic portion of the chain corresponds to 872–890 (HPLTILSTLPSAGVGALLA). The helical transmembrane segment at 891–913 (LELFNAPFSLIALIGIMLLIGIV) threads the bilayer. Over 914 to 943 (KKNAIMMVDFALEAQRHGNLTPQEAIFQAC) the chain is Cytoplasmic. Residues 944–966 (LLRFRPIMMTTLAALFGALPLVL) form a helical membrane-spanning segment. At 967 to 980 (SGGDGSELRQPLEI) the chain is on the periplasmic side. The helical transmembrane segment at 981 to 1003 (TIVGGLVMSQLLTLYTTPVVYLF) threads the bilayer. The Cytoplasmic portion of the chain corresponds to 1004 to 1021 (FDRLRLRFSRKPKQTVTE).

It belongs to the resistance-nodulation-cell division (RND) (TC 2.A.6) family. MdtC subfamily. As to quaternary structure, part of a tripartite efflux system composed of MdtA, MdtB and MdtC. MdtC forms a heteromultimer with MdtB.

The protein localises to the cell inner membrane. The chain is Multidrug resistance protein MdtC from Shigella flexneri.